The chain runs to 601 residues: HMG domain-containing protein 4 (601 aa).

A Glycyl lysine isopeptide (Lys-Gly) (interchain with G-Cter in SUMO2) cross-link involves residue Lys-8. Disordered regions lie at residues 51–410 (VRNS…KKKN) and 473–514 (TTVK…ASPA). The span at 82 to 93 (DYYYGDISSLES) shows a compositional bias: low complexity. Phosphoserine is present on Ser-102. Lys-191 is covalently cross-linked (Glycyl lysine isopeptide (Lys-Gly) (interchain with G-Cter in SUMO2)). A Phosphoserine modification is found at Ser-197. 2 stretches are compositionally biased toward polar residues: residues 212–221 (QYPSQQATVK) and 270–282 (DASQ…SANL). A compositionally biased stretch (basic residues) spans 316–344 (IKKKKKSKKSKKKKDKEKHKEKRHSKSKR). Residues 394–404 (EEKDKERERGE) are compositionally biased toward basic and acidic residues. The segment at residues 407–475 (KKKNMSAYQV…KQNKAEATTV (69 aa)) is a DNA-binding region (HMG box). Ser-497, Ser-502, and Ser-512 each carry phosphoserine.

The protein resides in the nucleus. In terms of biological role, negatively regulates Wnt/beta-catenin signaling during development. This chain is HMG domain-containing protein 4 (HMGXB4), found in Homo sapiens (Human).